A 581-amino-acid chain; its full sequence is Neither inactivation nor afterpotential protein G (581 aa).

Residues 1–26 form the signal peptide; that stretch reads MGMKFQKILVLAGIVIGFLSIIVVLA. 48–77 provides a ligand contact to FAD; sequence DYVIVGGGTGGSTLTSLLAKNSNGSVLLIE. Residues asparagine 70, asparagine 156, asparagine 404, and asparagine 464 are each glycosylated (N-linked (GlcNAc...) asparagine). Histidine 516 acts as the Proton acceptor in catalysis.

The protein belongs to the GMC oxidoreductase family. It depends on FAD as a cofactor.

It localises to the secreted. Its function is as follows. Oxidoreductase involved in biosynthesis of 3-hydroxyretinal, a chromophore for rhodopsin Rh1. Not responsible for the initial hydroxylation of the retinal ring but rather acts in a subsequent step in chromophore production. May catalyze the conversion of (3R)-3-hydroxyretinol to the 3S enantiomer. The protein is Neither inactivation nor afterpotential protein G (ninaG) of Drosophila melanogaster (Fruit fly).